The primary structure comprises 262 residues: NAD-dependent protein deacylase (262 aa).

Residues 1–262 (MSNLRRAAEA…AALSPPGVPT (262 aa)) form the Deacetylase sirtuin-type domain. 22–42 (GAGISADSGIPTFRDKLTGLW) lines the NAD(+) pocket. The substrate site is built by Tyr67 and Arg70. An NAD(+)-binding site is contributed by 101 to 104 (QNID). The Proton acceptor role is filled by His119. The Zn(2+) site is built by Cys127, Cys130, Cys155, and Cys158. NAD(+)-binding positions include 195-197 (GTS), 221-223 (NLE), and Ala239.

This sequence belongs to the sirtuin family. Class III subfamily. Zn(2+) is required as a cofactor.

Its subcellular location is the cytoplasm. It catalyses the reaction N(6)-acetyl-L-lysyl-[protein] + NAD(+) + H2O = 2''-O-acetyl-ADP-D-ribose + nicotinamide + L-lysyl-[protein]. The catalysed reaction is N(6)-succinyl-L-lysyl-[protein] + NAD(+) + H2O = 2''-O-succinyl-ADP-D-ribose + nicotinamide + L-lysyl-[protein]. In terms of biological role, NAD-dependent lysine deacetylase and desuccinylase that specifically removes acetyl and succinyl groups on target proteins. Modulates the activities of several proteins which are inactive in their acylated form. The protein is NAD-dependent protein deacylase of Pseudomonas putida (strain ATCC 47054 / DSM 6125 / CFBP 8728 / NCIMB 11950 / KT2440).